A 419-amino-acid polypeptide reads, in one-letter code: Elongation factor Tu, chloroplastic (419 aa).

In terms of domain architecture, tr-type G spans Lys-10–Lys-214. The tract at residues Gly-19 to Thr-26 is G1. Position 19-26 (Gly-19–Thr-26) interacts with GTP. Mg(2+) is bound at residue Thr-26. Positions Gly-60–Asn-64 are G2. The tract at residues Asp-81–Gly-84 is G3. GTP contacts are provided by residues Asp-81–His-85 and Asn-136–Asp-139. The interval Asn-136 to Asp-139 is G4. Residues Ser-174–Leu-176 form a G5 region.

This sequence belongs to the TRAFAC class translation factor GTPase superfamily. Classic translation factor GTPase family. EF-Tu/EF-1A subfamily.

It is found in the plastid. Its subcellular location is the chloroplast. It carries out the reaction GTP + H2O = GDP + phosphate + H(+). Functionally, GTP hydrolase that promotes the GTP-dependent binding of aminoacyl-tRNA to the A-site of ribosomes during protein biosynthesis. This is Elongation factor Tu, chloroplastic (tufA) from Stigeoclonium helveticum (Green alga).